Here is a 92-residue protein sequence, read N- to C-terminus: MTKSELIERLCAEQTHLSAKEIEDAVKNILEHMASTLEAGERIEIRGFGSFSLHYREPRVGRNPKTGDKVELEGKYVPHFKPGKELRERVNL.

This sequence belongs to the bacterial histone-like protein family. Heterodimer of an alpha and a beta chain.

This protein is one of the two subunits of integration host factor, a specific DNA-binding protein that functions in genetic recombination as well as in transcriptional and translational control. This chain is Integration host factor subunit beta, found in Vibrio cholerae serotype O1 (strain ATCC 39541 / Classical Ogawa 395 / O395).